An 835-amino-acid chain; its full sequence is Bifunctional uridylyltransferase/uridylyl-removing enzyme (835 aa).

The segment at 1–316 (MTDEAEDSGP…GGKPVAERSP (316 aa)) is uridylyltransferase. Positions 317–650 (LAEGVVEQDG…SADGPEPLGV (334 aa)) are uridylyl-removing. Residues 431–554 (VDRHLIETAV…DALATGPAAW (124 aa)) enclose the HD domain. Residues 610–645 (QTEPPADSAPAPSSPSSPSFPSPLSSPSSPSSADGP) form a disordered region. Pro residues predominate over residues 621-630 (PSSPSSPSFP). The span at 631–642 (SPLSSPSSPSSA) shows a compositional bias: low complexity. ACT domains follow at residues 651 to 736 (ELLI…LAER) and 765 to 835 (VIEV…SLRT).

This sequence belongs to the GlnD family. Requires Mg(2+) as cofactor.

The enzyme catalyses [protein-PII]-L-tyrosine + UTP = [protein-PII]-uridylyl-L-tyrosine + diphosphate. It catalyses the reaction [protein-PII]-uridylyl-L-tyrosine + H2O = [protein-PII]-L-tyrosine + UMP + H(+). Uridylyltransferase (UTase) activity is inhibited by glutamine, while glutamine activates uridylyl-removing (UR) activity. Its function is as follows. Modifies, by uridylylation and deuridylylation, the PII regulatory proteins (GlnB and homologs), in response to the nitrogen status of the cell that GlnD senses through the glutamine level. Under low glutamine levels, catalyzes the conversion of the PII proteins and UTP to PII-UMP and PPi, while under higher glutamine levels, GlnD hydrolyzes PII-UMP to PII and UMP (deuridylylation). Thus, controls uridylylation state and activity of the PII proteins, and plays an important role in the regulation of nitrogen assimilation and metabolism. The sequence is that of Bifunctional uridylyltransferase/uridylyl-removing enzyme from Streptomyces coelicolor (strain ATCC BAA-471 / A3(2) / M145).